The primary structure comprises 180 residues: dCTP deaminase, dUMP-forming (180 aa).

DCTP is bound by residues 100-105 (RSSLGR), Asp-117, 125-127 (TLE), Gln-146, Tyr-160, and Gln-167. Glu-127 (proton donor/acceptor) is an active-site residue.

This sequence belongs to the dCTP deaminase family. In terms of assembly, homotrimer.

The catalysed reaction is dCTP + 2 H2O = dUMP + NH4(+) + diphosphate. Its pathway is pyrimidine metabolism; dUMP biosynthesis; dUMP from dCTP: step 1/1. In terms of biological role, bifunctional enzyme that catalyzes both the deamination of dCTP to dUTP and the hydrolysis of dUTP to dUMP without releasing the toxic dUTP intermediate. The polypeptide is dCTP deaminase, dUMP-forming (Sulfurihydrogenibium sp. (strain YO3AOP1)).